A 2371-amino-acid polypeptide reads, in one-letter code: Highly reducing polyketide synthase ntnH (2371 aa).

Residues 10–429 (PSPIAIVGIG…GANAHVILEG (420 aa)) enclose the Ketosynthase family 3 (KS3) domain. Residues cysteine 180, histidine 316, and histidine 352 each act as for beta-ketoacyl synthase activity in the active site. The interval 528–796 (FIFTGQGAQW…NSCLSRGADA (269 aa)) is malonyl-CoA:ACP transacylase (MAT) domain. The tract at residues 858 to 986 (HELLGARVIG…GKVHPGNAST (129 aa)) is N-terminal hotdog fold. Positions 858–1142 (HELLGARVIG…GIRFRILENN (285 aa)) are dehydratase (DH) domain. One can recognise a PKS/mFAS DH domain in the interval 858 to 1145 (HELLGARVIG…FRILENNRSK (288 aa)). The active-site Proton acceptor; for dehydratase activity is histidine 890. The tract at residues 1001 to 1145 (VRGVISAKWY…FRILENNRSK (145 aa)) is C-terminal hotdog fold. The active-site Proton donor; for dehydratase activity is aspartate 1059. Residues 1309–1456 (FFQLLGHNKK…FENVTAIMDQ (148 aa)) are methyltransferase (CMet) domain. The interval 1669 to 1968 (GLLSSLQWQG…GHRPIGAICI (300 aa)) is enoyl reductase (ER) (ER) domain. The interval 1993–2167 (SYVLIGGLGG…ASVIDLGVME (175 aa)) is ketoreductase (KR) domain. The 83-residue stretch at 2280–2362 (EDETAVAEFL…DLGKLARSRI (83 aa)) folds into the Carrier domain. Serine 2322 bears the O-(pantetheine 4'-phosphoryl)serine mark.

It functions in the pathway secondary metabolite biosynthesis; terpenoid biosynthesis. Its function is as follows. Highly reducing polyketide synthase; part of the gene cluster that mediates the biosynthesis of the meroterpenoids nectripenoids A and B, as well as cochliquninone D and isocochliquninone E. The pathway probably begins with the HR-PKS ntnH that catalyzes two chain-extension steps to form a reduced triketide, which then primes the SAT domain in the NR-PKS ntnG to initiate three more cycles of extension to give a linear hexaketide corresponding to the polyketide part of nectripenoids. The FAD-dependent monooxygenase ntnJ then performs an oxidative decarboxylation at C11 of the ntnH/ntnG product, via an electrophilic aromatic hydroxylation with concomitant ipso-decarboxylation. The membrane-bound polyprenyl transferase ntnF then introduces a farnesyl group before the FAD-dependent monooxygenase ntnK functions as the first epoxidase on terminal C12'-C13' olefin, followed by a second epoxidation on C7'-C8' catalyzed by ntnA. The terpene cyclase/mutase ntnI then initiates the sequential tricyclic ring formation through protonation of the terminal epoxide and catalyzes the regioselective and stereoselective 6/6/6-tricyclic ring formation. The cytochrome P450 monooxygenase ntnM may then hydroxylate C1'. The chain is Highly reducing polyketide synthase ntnH from Nectria sp.